Reading from the N-terminus, the 226-residue chain is ATP synthase F(0) complex subunit a (226 aa).

Transmembrane regions (helical) follow at residues 6-26 (FASF…IIMF), 68-88 (WSLM…LGLL), 97-117 (QLSM…ITGF), 138-158 (IPML…ALAV), 164-184 (ITAG…LTSI), and 189-209 (AILT…VALI).

The protein belongs to the ATPase A chain family. Component of the ATP synthase complex composed at least of ATP5F1A/subunit alpha, ATP5F1B/subunit beta, ATP5MC1/subunit c (homooctomer), MT-ATP6/subunit a, MT-ATP8/subunit 8, ATP5ME/subunit e, ATP5MF/subunit f, ATP5MG/subunit g, ATP5MK/subunit k, ATP5MJ/subunit j, ATP5F1C/subunit gamma, ATP5F1D/subunit delta, ATP5F1E/subunit epsilon, ATP5PF/subunit F6, ATP5PB/subunit b, ATP5PD/subunit d, ATP5PO/subunit OSCP. ATP synthase complex consists of a soluble F(1) head domain (subunits alpha(3) and beta(3)) - the catalytic core - and a membrane F(0) domain - the membrane proton channel (subunits c, a, 8, e, f, g, k and j). These two domains are linked by a central stalk (subunits gamma, delta, and epsilon) rotating inside the F1 region and a stationary peripheral stalk (subunits F6, b, d, and OSCP). Interacts with DNAJC30; interaction is direct.

It is found in the mitochondrion inner membrane. The catalysed reaction is H(+)(in) = H(+)(out). In terms of biological role, subunit a, of the mitochondrial membrane ATP synthase complex (F(1)F(0) ATP synthase or Complex V) that produces ATP from ADP in the presence of a proton gradient across the membrane which is generated by electron transport complexes of the respiratory chain. ATP synthase complex consist of a soluble F(1) head domain - the catalytic core - and a membrane F(1) domain - the membrane proton channel. These two domains are linked by a central stalk rotating inside the F(1) region and a stationary peripheral stalk. During catalysis, ATP synthesis in the catalytic domain of F(1) is coupled via a rotary mechanism of the central stalk subunits to proton translocation. With the subunit c (ATP5MC1), forms the proton-conducting channel in the F(0) domain, that contains two crucial half-channels (inlet and outlet) that facilitate proton movement from the mitochondrial intermembrane space (IMS) into the matrix. Protons are taken up via the inlet half-channel and released through the outlet half-channel, following a Grotthuss mechanism. In Ictidomys tridecemlineatus (Thirteen-lined ground squirrel), this protein is ATP synthase F(0) complex subunit a.